The primary structure comprises 611 residues: Elongation factor 4 (611 aa).

A tr-type G domain is found at 11 to 193 (EKIRNFSIIA…QVVEYVPAPS (183 aa)). Residues 23-28 (DHGKST) and 140-143 (NKID) each bind GTP.

The protein belongs to the TRAFAC class translation factor GTPase superfamily. Classic translation factor GTPase family. LepA subfamily.

It is found in the cell membrane. The catalysed reaction is GTP + H2O = GDP + phosphate + H(+). Functionally, required for accurate and efficient protein synthesis under certain stress conditions. May act as a fidelity factor of the translation reaction, by catalyzing a one-codon backward translocation of tRNAs on improperly translocated ribosomes. Back-translocation proceeds from a post-translocation (POST) complex to a pre-translocation (PRE) complex, thus giving elongation factor G a second chance to translocate the tRNAs correctly. Binds to ribosomes in a GTP-dependent manner. The polypeptide is Elongation factor 4 (Enterococcus faecalis (strain ATCC 700802 / V583)).